The chain runs to 479 residues: Aspartyl/glutamyl-tRNA(Asn/Gln) amidotransferase subunit B (479 aa).

It belongs to the GatB/GatE family. GatB subfamily. Heterotrimer of A, B and C subunits.

The enzyme catalyses L-glutamyl-tRNA(Gln) + L-glutamine + ATP + H2O = L-glutaminyl-tRNA(Gln) + L-glutamate + ADP + phosphate + H(+). It catalyses the reaction L-aspartyl-tRNA(Asn) + L-glutamine + ATP + H2O = L-asparaginyl-tRNA(Asn) + L-glutamate + ADP + phosphate + 2 H(+). Its function is as follows. Allows the formation of correctly charged Asn-tRNA(Asn) or Gln-tRNA(Gln) through the transamidation of misacylated Asp-tRNA(Asn) or Glu-tRNA(Gln) in organisms which lack either or both of asparaginyl-tRNA or glutaminyl-tRNA synthetases. The reaction takes place in the presence of glutamine and ATP through an activated phospho-Asp-tRNA(Asn) or phospho-Glu-tRNA(Gln). The protein is Aspartyl/glutamyl-tRNA(Asn/Gln) amidotransferase subunit B of Streptococcus pyogenes serotype M4 (strain MGAS10750).